The following is a 75-amino-acid chain: Small ribosomal subunit protein bS18 (75 aa).

The protein belongs to the bacterial ribosomal protein bS18 family. As to quaternary structure, part of the 30S ribosomal subunit. Forms a tight heterodimer with protein bS6.

Functionally, binds as a heterodimer with protein bS6 to the central domain of the 16S rRNA, where it helps stabilize the platform of the 30S subunit. This chain is Small ribosomal subunit protein bS18, found in Buchnera aphidicola subsp. Cinara cedri (strain Cc).